We begin with the raw amino-acid sequence, 432 residues long: Phosphomethylpyrimidine synthase (432 aa).

Substrate-binding positions include Asn-66, Met-95, Tyr-124, His-163, 185-187 (SRG), 226-229 (DGLR), and Glu-265. Residue His-269 participates in Zn(2+) binding. Tyr-292 contacts substrate. His-333 provides a ligand contact to Zn(2+). Residues Cys-409, Cys-412, and Cys-416 each coordinate [4Fe-4S] cluster.

This sequence belongs to the ThiC family. It depends on [4Fe-4S] cluster as a cofactor.

The catalysed reaction is 5-amino-1-(5-phospho-beta-D-ribosyl)imidazole + S-adenosyl-L-methionine = 4-amino-2-methyl-5-(phosphooxymethyl)pyrimidine + CO + 5'-deoxyadenosine + formate + L-methionine + 3 H(+). The protein operates within cofactor biosynthesis; thiamine diphosphate biosynthesis. Functionally, catalyzes the synthesis of the hydroxymethylpyrimidine phosphate (HMP-P) moiety of thiamine from aminoimidazole ribotide (AIR) in a radical S-adenosyl-L-methionine (SAM)-dependent reaction. The sequence is that of Phosphomethylpyrimidine synthase from Desulforamulus reducens (strain ATCC BAA-1160 / DSM 100696 / MI-1) (Desulfotomaculum reducens).